A 1269-amino-acid polypeptide reads, in one-letter code: DNA-directed RNA polymerase subunit beta (1269 aa).

The protein belongs to the RNA polymerase beta chain family. In terms of assembly, the RNAP catalytic core consists of 2 alpha, 1 beta, 1 beta' and 1 omega subunit. When a sigma factor is associated with the core the holoenzyme is formed, which can initiate transcription.

The catalysed reaction is RNA(n) + a ribonucleoside 5'-triphosphate = RNA(n+1) + diphosphate. Its function is as follows. DNA-dependent RNA polymerase catalyzes the transcription of DNA into RNA using the four ribonucleoside triphosphates as substrates. This chain is DNA-directed RNA polymerase subunit beta, found in Porphyromonas gingivalis (strain ATCC BAA-308 / W83).